The primary structure comprises 276 residues: Undecaprenyl-diphosphatase (276 aa).

The next 7 membrane-spanning stretches (helical) occupy residues 42-62 (AVTA…IVYF), 88-108 (ALLG…GYLG), 116-136 (LRSL…IVYA), 149-169 (MRLP…VPGV), 187-207 (VAAT…AGIF), 222-242 (SLVV…AWLL), and 253-273 (FVWY…TGLV).

Belongs to the UppP family.

It localises to the cell membrane. It catalyses the reaction di-trans,octa-cis-undecaprenyl diphosphate + H2O = di-trans,octa-cis-undecaprenyl phosphate + phosphate + H(+). Functionally, catalyzes the dephosphorylation of undecaprenyl diphosphate (UPP). Confers resistance to bacitracin. The chain is Undecaprenyl-diphosphatase from Acidothermus cellulolyticus (strain ATCC 43068 / DSM 8971 / 11B).